The chain runs to 141 residues: Large ribosomal subunit protein uL11 (141 aa).

Belongs to the universal ribosomal protein uL11 family. In terms of assembly, part of the ribosomal stalk of the 50S ribosomal subunit. Interacts with L10 and the large rRNA to form the base of the stalk. L10 forms an elongated spine to which L12 dimers bind in a sequential fashion forming a multimeric L10(L12)X complex. In terms of processing, one or more lysine residues are methylated.

Its function is as follows. Forms part of the ribosomal stalk which helps the ribosome interact with GTP-bound translation factors. The polypeptide is Large ribosomal subunit protein uL11 (Prochlorococcus marinus (strain MIT 9215)).